The primary structure comprises 664 residues: Acetolactate synthase 2, chloroplastic (664 aa).

Positions Met-1 to Phe-34 are enriched in low complexity. Residues Met-1 to Thr-51 form a disordered region. A chloroplast-targeting transit peptide spans Met-1–Arg-91. Glu-138 provides a ligand contact to thiamine diphosphate. A disulfide bond links Cys-158 and Cys-304. FAD is bound by residues Arg-240, His-346–Arg-367, and Asp-389–Asp-408. A thiamine pyrophosphate binding region spans residues Gln-481 to His-561. Asp-532 and Asn-559 together coordinate Mg(2+).

Belongs to the TPP enzyme family. The cofactor is Mg(2+). It depends on thiamine diphosphate as a cofactor.

The protein localises to the plastid. The protein resides in the chloroplast. The enzyme catalyses 2 pyruvate + H(+) = (2S)-2-acetolactate + CO2. It participates in amino-acid biosynthesis; L-isoleucine biosynthesis; L-isoleucine from 2-oxobutanoate: step 1/4. The protein operates within amino-acid biosynthesis; L-valine biosynthesis; L-valine from pyruvate: step 1/4. In Nicotiana tabacum (Common tobacco), this protein is Acetolactate synthase 2, chloroplastic (ALS SURB).